The following is a 354-amino-acid chain: Virulence plasmid protein pGP2-D (354 aa).

This is Virulence plasmid protein pGP2-D from Chlamydia trachomatis serovar L2 (strain ATCC VR-902B / DSM 19102 / 434/Bu).